We begin with the raw amino-acid sequence, 307 residues long: Ribonuclease Z (307 aa).

Residues histidine 63, histidine 65, aspartate 67, histidine 68, histidine 141, aspartate 212, and histidine 270 each coordinate Zn(2+). The active-site Proton acceptor is the aspartate 67.

It belongs to the RNase Z family. Homodimer. It depends on Zn(2+) as a cofactor.

The catalysed reaction is Endonucleolytic cleavage of RNA, removing extra 3' nucleotides from tRNA precursor, generating 3' termini of tRNAs. A 3'-hydroxy group is left at the tRNA terminus and a 5'-phosphoryl group is left at the trailer molecule.. Functionally, zinc phosphodiesterase, which displays some tRNA 3'-processing endonuclease activity. Probably involved in tRNA maturation, by removing a 3'-trailer from precursor tRNA. The sequence is that of Ribonuclease Z from Bacillus cereus (strain ZK / E33L).